Reading from the N-terminus, the 425-residue chain is Protein CLP1 homolog (425 aa).

Residues glutamate 18, lysine 59, and 121-126 (DVGKST) each bind ATP.

It belongs to the Clp1 family. Clp1 subfamily.

The protein resides in the nucleus. In terms of biological role, required for endonucleolytic cleavage during polyadenylation-dependent pre-mRNA 3'-end formation. The sequence is that of Protein CLP1 homolog (cbc) from Drosophila grimshawi (Hawaiian fruit fly).